Reading from the N-terminus, the 302-residue chain is MEKMSKFSHLLKAHPCFNEKVHDKYGRVHLPVAPRCNIACKFCKRSVSKECCEHRPGVSLGVLKPEDVEDYLKKILKEMPNIKVVGIAGPGDSLFNKETFETLKIIDEKFPNLIKCISTNGLLLSKYYKDLANLNVRTITVTVNAIKPEILEKIVDWVYYDKKLYRGLEGAKLLIEKQIEGIKKASEEDFIIKINTVLIPEINMDHVVEIAKFFKDYAYVQNIIPLIPQYKMKELRAPTCEEIKKVRKECEKYIPQFRACGQCRADAVGLIKEKELLKEFFKEKNKEKNIKLEVFDLKHFSH.

In terms of domain architecture, Radical SAM core spans 22-264 (HDKYGRVHLP…PQFRACGQCR (243 aa)). [4Fe-4S] cluster-binding residues include cysteine 36, cysteine 40, and cysteine 43. The S-adenosyl-L-methionine site is built by glycine 91, threonine 142, and isoleucine 194. Residues cysteine 260 and cysteine 263 each coordinate [4Fe-4S] cluster.

The protein belongs to the radical SAM superfamily. NifB family. As to quaternary structure, monomer. Requires [4Fe-4S] cluster as cofactor.

It participates in cofactor biosynthesis; Fe-Mo cofactor biosynthesis. In terms of biological role, involved in the biosynthesis of the iron-molybdenum cofactor (FeMo-co or M-cluster) found in the dinitrogenase enzyme of the nitrogenase complex in nitrogen-fixing microorganisms. NifB catalyzes the crucial step of radical SAM-dependent carbide insertion that occurs concomitant with the insertion of a 9th sulfur and the rearrangement/coupling of two [4Fe-4S] clusters into a [8Fe-9S-C] cluster, the precursor to the M-cluster. The protein is FeMo cofactor biosynthesis protein NifB of Methanocaldococcus infernus (strain DSM 11812 / JCM 15783 / ME).